Here is a 569-residue protein sequence, read N- to C-terminus: Santalene synthase (569 aa).

(2E)-geranyl diphosphate contacts are provided by Arg-284, Asp-321, Asp-325, and Arg-460. Mg(2+)-binding residues include Asp-321 and Asp-325. The short motif at 321 to 325 is the DDXXD motif element; sequence DDGYD. Positions 463, 467, and 471 each coordinate Mg(2+).

It belongs to the terpene synthase family. Tpsb subfamily. The cofactor is Mg(2+). Requires Mn(2+) as cofactor.

The catalysed reaction is (2E,6E)-farnesyl diphosphate = (1S,5S,6R)-alpha-bergamotene + diphosphate. The enzyme catalyses (2E,6E)-farnesyl diphosphate = (+)-alpha-santalene + diphosphate. It carries out the reaction (2E,6E)-farnesyl diphosphate = (-)-beta-santalene + diphosphate. Functionally, catalyzes a mixture of sesquiterpenoids from (2E,6E)-farnesyl diphosphate in fragrance biosynthesis. Catalyzes the formation of alpha-santalene, beta-santalene, epi-beta-santalene and exo-alpha-bergamotene, as well as traces of alpha-farnesene and beta-farnesene. Also acts with (Z,Z)-farnesyl diphosphate isomer, producing alpha-endo-bergamotene, alpha-santalene, (Z)-beta-farnesene, epi-beta-santalene, and beta-santalene. The chain is Santalene synthase from Santalum album (White sandalwood).